Reading from the N-terminus, the 476-residue chain is Ubiquitin-conjugating enzyme E2 variant 3 (476 aa).

The region spanning 2–145 is the UEV domain; the sequence is EFSAETLRQQ…EEELPLYSLS (144 aa). 185–213 is an NAD(+) binding site; the sequence is GDMALACLLAVSAKGTAGKLLLLDPTDGE.

This sequence in the N-terminal section; belongs to the ubiquitin-conjugating enzyme family. UEV subfamily. The protein in the C-terminal section; belongs to the LDH/MDH superfamily. In terms of assembly, homodimer.

Functionally, possible negative regulator of polyubiquitination. This chain is Ubiquitin-conjugating enzyme E2 variant 3 (uevld), found in Xenopus tropicalis (Western clawed frog).